The sequence spans 131 residues: UPF0102 protein YraN (131 aa).

The span at 1–19 (MATVPTRSGSPRQLTTKQT) shows a compositional bias: polar residues. A disordered region spans residues 1-21 (MATVPTRSGSPRQLTTKQTGD).

This sequence belongs to the UPF0102 family.

This Escherichia coli O127:H6 (strain E2348/69 / EPEC) protein is UPF0102 protein YraN.